A 113-amino-acid chain; its full sequence is Small ribosomal subunit protein bS6 (113 aa).

It belongs to the bacterial ribosomal protein bS6 family.

In terms of biological role, binds together with bS18 to 16S ribosomal RNA. The sequence is that of Small ribosomal subunit protein bS6 from Wigglesworthia glossinidia brevipalpis.